The following is a 909-amino-acid chain: Glucan endo-1,3-beta-D-glucosidase ARB_01444 (909 aa).

An N-terminal signal peptide occupies residues 1-23; that stretch reads MKPYTTLPGVAVLVSLLTQSAHA. Residues 136–187 form a disordered region; that stretch reads KRSPAPQRHPPAPTKATAGYQFTNCTSTSNPGPTATSPTSGIPSQPSAPPAT. A compositionally biased stretch (polar residues) spans 155–180; it reads YQFTNCTSTSNPGPTATSPTSGIPSQ. Asn-159, Asn-239, and Asn-259 each carry an N-linked (GlcNAc...) asparagine glycan. The interval 191–430 is beta-sandwich subdomain; it reads QDIFQPIAKD…KGVIQVAKNP (240 aa). The region spanning 191-909 is the GH81 domain; the sequence is QDIFQPIAKD…AGEYSTYIAL (719 aa). Residues 431–524 are alpha/beta subdomain; that stretch reads SAEEGEGIYD…GDSWTMVEGN (94 aa). A (alpha/beta)6 barrel subdomain region spans residues 539–909; that stretch reads SSQVTLSEGA…AGEYSTYIAL (371 aa). Asp-654 is a catalytic residue. The (1,3-beta-D-glucosyl)n site is built by His-658, Asp-727, Glu-729, and Glu-733. Catalysis depends on residues Glu-729 and Glu-733. The interval 798–800 is may provide specificity for triple-helical beta-glucan; that stretch reads KID. (1,3-beta-D-glucosyl)n is bound at residue Tyr-811.

This sequence belongs to the glycosyl hydrolase 81 family.

Its subcellular location is the secreted. The protein localises to the cell wall. The catalysed reaction is Hydrolysis of (1-&gt;3)-beta-D-glucosidic linkages in (1-&gt;3)-beta-D-glucans.. Its function is as follows. Cleaves internal linkages in 1,3-beta-glucan. Probably involved in cell separation after cytokinesis. The protein is Glucan endo-1,3-beta-D-glucosidase ARB_01444 of Arthroderma benhamiae (strain ATCC MYA-4681 / CBS 112371) (Trichophyton mentagrophytes).